Consider the following 88-residue polypeptide: Large ribosomal subunit protein eL31 (88 aa).

This sequence belongs to the eukaryotic ribosomal protein eL31 family.

The polypeptide is Large ribosomal subunit protein eL31 (Methanoregula boonei (strain DSM 21154 / JCM 14090 / 6A8)).